The chain runs to 199 residues: Large ribosomal subunit protein bL25 (199 aa).

This sequence belongs to the bacterial ribosomal protein bL25 family. CTC subfamily. Part of the 50S ribosomal subunit; part of the 5S rRNA/L5/L18/L25 subcomplex. Contacts the 5S rRNA. Binds to the 5S rRNA independently of L5 and L18.

Functionally, this is one of the proteins that binds to the 5S RNA in the ribosome where it forms part of the central protuberance. This is Large ribosomal subunit protein bL25 from Pseudomonas fluorescens (strain ATCC BAA-477 / NRRL B-23932 / Pf-5).